Consider the following 311-residue polypeptide: HTH-type transcriptional regulator PcaQ (311 aa).

Residues 6–63 (IKFRHLQTFVEVARQKSVIRAAEILHVSQPAVTKTIRELEDVLGVSLLEREGRGIRIS) form the HTH lysR-type domain. The H-T-H motif DNA-binding region spans 23 to 42 (VIRAAEILHVSQPAVTKTIR).

Belongs to the LysR transcriptional regulatory family.

Activates transcription of the pcaDCHGB operon for the catabolism of the phenolic compound protocatechuate. The sequence is that of HTH-type transcriptional regulator PcaQ (pcaQ) from Agrobacterium fabrum (strain C58 / ATCC 33970) (Agrobacterium tumefaciens (strain C58)).